The chain runs to 211 residues: Protein CHLORORESPIRATORY REDUCTION 41, chloroplastic (211 aa).

A chloroplast-targeting transit peptide spans 1–38 (MASTSTLLLPSLSSKNLHIAVPIRTNSFVRRTTKFSTK). A coiled-coil region spans residues 136–163 (AKAGEIVAERAREEAEVLRDEGKVEERM).

In terms of assembly, biogenesis factor component of the plastidial NDH subcomplex A.

The protein resides in the plastid. Its subcellular location is the chloroplast. The protein localises to the chloroplast stroma. Required for both formation and activity of the chloroplast NAD(P)H dehydrogenase (NDH) complex of the photosynthetic electron transport chain. Functions in assembly or stabilization of the NDH complex; probably involved, together with NdhO and NdhH, in the formation of an NDH subcomplex A assembly intermediate (NAI500). In Arabidopsis thaliana (Mouse-ear cress), this protein is Protein CHLORORESPIRATORY REDUCTION 41, chloroplastic.